A 185-amino-acid chain; its full sequence is UPF0397 protein LJ_1703 (185 aa).

The next 5 membrane-spanning stretches (helical) occupy residues 6–26 (GLSV…VILA), 46–66 (FLAL…GFIG), 78–98 (TWWS…LYGM), 113–133 (IGFN…IAPV), and 147–167 (FLQG…LGTI).

Belongs to the UPF0397 family.

It localises to the cell membrane. The sequence is that of UPF0397 protein LJ_1703 from Lactobacillus johnsonii (strain CNCM I-12250 / La1 / NCC 533).